An 88-amino-acid chain; its full sequence is Protein transport protein SBH2 (88 aa).

The disordered stretch occupies residues 1-42 (MAASVPPGGQRILQKRRQAQSIKEKQAKQTPTSTRQAGYGGS). At 1 to 61 (MAASVPPGGQ…DEANGFRVDS (61 aa)) the chain is on the cytoplasmic side. Polar residues predominate over residues 28-42 (KQTPTSTRQAGYGGS). The chain crosses the membrane as a helical span at residues 62-82 (LVVLFLSVGFIFSVIALHLLT).

Belongs to the SEC61-beta family. Component of the heterotrimeric Ssh1 complex, which is composed of SSH1, SBH2 and SSS1.

It localises to the endoplasmic reticulum membrane. In terms of biological role, part of the Ssh1 complex, which probably is the major component of a channel-forming translocon complex that may function exclusively in the cotranslational pathway of protein endoplasmic reticulum (ER) import. In Saccharomyces cerevisiae (strain ATCC 204508 / S288c) (Baker's yeast), this protein is Protein transport protein SBH2 (SBH2).